Here is a 160-residue protein sequence, read N- to C-terminus: Cytochrome b6-f complex subunit 4 (160 aa).

3 consecutive transmembrane segments (helical) span residues L36–V56, L95–E115, and T131–I151.

This sequence belongs to the cytochrome b family. PetD subfamily. In terms of assembly, the 4 large subunits of the cytochrome b6-f complex are cytochrome b6, subunit IV (17 kDa polypeptide, petD), cytochrome f and the Rieske protein, while the 4 small subunits are petG, petL, petM and petN. The complex functions as a dimer.

It localises to the plastid. It is found in the chloroplast thylakoid membrane. In terms of biological role, component of the cytochrome b6-f complex, which mediates electron transfer between photosystem II (PSII) and photosystem I (PSI), cyclic electron flow around PSI, and state transitions. The sequence is that of Cytochrome b6-f complex subunit 4 from Chlorella vulgaris (Green alga).